The chain runs to 537 residues: Putative cysteine ligase BshC (537 aa).

Residues 383-451 (MERTQKLLKQ…EVKENQDNFN (69 aa)) adopt a coiled-coil conformation.

Belongs to the BshC family.

Functionally, involved in bacillithiol (BSH) biosynthesis. May catalyze the last step of the pathway, the addition of cysteine to glucosamine malate (GlcN-Mal) to generate BSH. The chain is Putative cysteine ligase BshC from Staphylococcus haemolyticus (strain JCSC1435).